The chain runs to 480 residues: ATP synthase subunit beta (480 aa).

153–160 serves as a coordination point for ATP; that stretch reads GGAGVGKT.

Belongs to the ATPase alpha/beta chains family. As to quaternary structure, F-type ATPases have 2 components, CF(1) - the catalytic core - and CF(0) - the membrane proton channel. CF(1) has five subunits: alpha(3), beta(3), gamma(1), delta(1), epsilon(1). CF(0) has three main subunits: a(1), b(2) and c(9-12). The alpha and beta chains form an alternating ring which encloses part of the gamma chain. CF(1) is attached to CF(0) by a central stalk formed by the gamma and epsilon chains, while a peripheral stalk is formed by the delta and b chains.

The protein localises to the cell membrane. The enzyme catalyses ATP + H2O + 4 H(+)(in) = ADP + phosphate + 5 H(+)(out). Functionally, produces ATP from ADP in the presence of a proton gradient across the membrane. The catalytic sites are hosted primarily by the beta subunits. The sequence is that of ATP synthase subunit beta from Lactobacillus johnsonii (strain CNCM I-12250 / La1 / NCC 533).